Here is a 534-residue protein sequence, read N- to C-terminus: UDP-glucuronosyltransferase 1A3 (534 aa).

The signal sequence occupies residues 1-28 (MATGLQVPLPWLATGLLLLLSVQPWAES). N-linked (GlcNAc...) asparagine glycosylation is found at Asn119, Asn142, Asn296, and Asn348. Residues 492–508 (VIGFLLAVVLTVAFITF) form a helical membrane-spanning segment.

This sequence belongs to the UDP-glycosyltransferase family. As to quaternary structure, homodimer. Homooligomer. Interacts with UGT1A1, UGT1A4, UGT1A6, UGT1A7, UGT1A8, UGT1A9 and UGT1A10 to form heterodimers. Isoform 1 interacts with isoform 2/i2 suggesting that oligomerization is involved in negative regulation of transferase activity by isoform 2. Isoform 1 also interacts with respective i2 isoforms of UGT1A1, UGT1A4, UGT1A6, UGT1A7, UGT1A8, UGT1A9 and UGT1A10. As to expression, expressed in liver, kidney, colon, esophagus and small intestine. In terms of tissue distribution, expressed in liver, kidney and colon. Not expressed in esophagus and small intestine.

The protein resides in the endoplasmic reticulum membrane. It carries out the reaction glucuronate acceptor + UDP-alpha-D-glucuronate = acceptor beta-D-glucuronoside + UDP + H(+). It catalyses the reaction 17beta-estradiol + UDP-alpha-D-glucuronate = 17beta-estradiol 3-O-(beta-D-glucuronate) + UDP + H(+). The catalysed reaction is 17beta-estradiol + UDP-alpha-D-glucuronate = 17beta-estradiol 17-O-(beta-D-glucuronate) + UDP + H(+). The enzyme catalyses 17alpha-estradiol + UDP-alpha-D-glucuronate = 17alpha-estradiol 3-O-(beta-D-glucuronate) + UDP + H(+). It carries out the reaction estrone + UDP-alpha-D-glucuronate = estrone 3-O-(beta-D-glucuronate) + UDP + H(+). It catalyses the reaction chenodeoxycholate + UDP-alpha-D-glucuronate = chenodeoxycholoyl-24-O-(beta-D-glucuronate) + UDP. The catalysed reaction is deoxycholate + UDP-alpha-D-glucuronate = deoxycholoyl-24-O-(beta-D-glucuronate) + UDP. The enzyme catalyses lithocholate + UDP-alpha-D-glucuronate = lithocholoyl-24-O-(beta-D-glucuronate) + UDP. It carries out the reaction hyodeoxycholate + UDP-alpha-D-glucuronate = hyodeoxycholoyl-24-O-(beta-D-glucuronate) + UDP. It catalyses the reaction hyocholate + UDP-alpha-D-glucuronate = hyocholoyl-24-O-(beta-D-glucuronate) + UDP. The catalysed reaction is calcidiol + UDP-alpha-D-glucuronate = calcidiol 25-O-(beta-D-glucuronide) + UDP + H(+). The enzyme catalyses (E)-ferulate + UDP-alpha-D-glucuronate = (E)-4-O-(beta-D-glucuronosyl)-ferulate + UDP + H(+). It carries out the reaction (E)-ferulate + UDP-alpha-D-glucuronate = (E)-ferulic acid beta-D-glucuronate ester + UDP. It catalyses the reaction losartan + UDP-alpha-D-glucuronate = losartan-2-N-beta-D-glucuronide + UDP. The catalysed reaction is candesartan + UDP-alpha-D-glucuronate = candesartan-2-N-beta-D-glucuronide + UDP. The enzyme catalyses zolasartan + UDP-alpha-D-glucuronate = zolarsartan-2-N-beta-D-glucuronide + UDP. UDP-glucuronosyltransferase (UGT) that catalyzes phase II biotransformation reactions in which lipophilic substrates are conjugated with glucuronic acid to increase the metabolite's water solubility, thereby facilitating excretion into either the urine or bile. Essential for the elimination and detoxification of drugs, xenobiotics and endogenous compounds. Catalyzes the glucuronidation of endogenous estrogen hormones such as estradiol and estrone. Contributes to bile acid (BA) detoxification by catalyzing the glucuronidation of BA substrates, which are natural detergents for dietary lipids absorption. Involved in the glucuronidation of calcidiol, which is the major circulating form of vitamin D3, essential for the regulation of calcium and phosphate homeostasis. Involved in the glucuronidation of the phytochemical ferulic acid at the phenolic or the carboxylic acid group. Involved in the glucuronidation of the AGTR1 angiotensin receptor antagonists losartan, candesartan and zolarsartan, which can inhibit the effect of angiotensin II. Functionally, lacks UDP-glucuronosyltransferase (UGT) activity but acts as a negative regulator of isoform 1. The sequence is that of UDP-glucuronosyltransferase 1A3 from Homo sapiens (Human).